Consider the following 472-residue polypeptide: Proline--tRNA ligase (472 aa).

Belongs to the class-II aminoacyl-tRNA synthetase family. ProS type 3 subfamily. Homodimer.

It is found in the cytoplasm. It carries out the reaction tRNA(Pro) + L-proline + ATP = L-prolyl-tRNA(Pro) + AMP + diphosphate. Its function is as follows. Catalyzes the attachment of proline to tRNA(Pro) in a two-step reaction: proline is first activated by ATP to form Pro-AMP and then transferred to the acceptor end of tRNA(Pro). The polypeptide is Proline--tRNA ligase (Ureaplasma parvum serovar 3 (strain ATCC 27815 / 27 / NCTC 11736)).